We begin with the raw amino-acid sequence, 528 residues long: Xylose import ATP-binding protein XylG (528 aa).

2 ABC transporter domains span residues 6-245 (LQMN…VGRE) and 262-507 (FEAR…LSHP). 38–45 (GENGAGKS) is a binding site for ATP. The segment at 504-528 (LSHPGDPDSNDPANNNHNDNDRKTT) is disordered.

Belongs to the ABC transporter superfamily. Xylose importer (TC 3.A.1.2.4) family. In terms of assembly, the complex is composed of two ATP-binding proteins (XylG), two transmembrane proteins (XylH) and a solute-binding protein (XylF).

Its subcellular location is the cell inner membrane. It carries out the reaction D-xylose(out) + ATP + H2O = D-xylose(in) + ADP + phosphate + H(+). Part of the ABC transporter complex XylFGH involved in xylose import. Responsible for energy coupling to the transport system. The protein is Xylose import ATP-binding protein XylG of Pseudomonas syringae pv. tomato (strain ATCC BAA-871 / DC3000).